Consider the following 585-residue polypeptide: DNA mismatch repair protein MutL (585 aa).

It belongs to the DNA mismatch repair MutL/HexB family.

Its function is as follows. This protein is involved in the repair of mismatches in DNA. It is required for dam-dependent methyl-directed DNA mismatch repair. May act as a 'molecular matchmaker', a protein that promotes the formation of a stable complex between two or more DNA-binding proteins in an ATP-dependent manner without itself being part of a final effector complex. This Methanoculleus marisnigri (strain ATCC 35101 / DSM 1498 / JR1) protein is DNA mismatch repair protein MutL.